We begin with the raw amino-acid sequence, 174 residues long: RNA pyrophosphohydrolase (174 aa).

The region spanning 6-149 (GFRANVGIII…KRDVYRKVMK (144 aa)) is the Nudix hydrolase domain. Residues 38-59 (GGVDDGETAEEAMYRELYEEVG) carry the Nudix box motif.

Belongs to the Nudix hydrolase family. RppH subfamily. The cofactor is a divalent metal cation.

Its function is as follows. Accelerates the degradation of transcripts by removing pyrophosphate from the 5'-end of triphosphorylated RNA, leading to a more labile monophosphorylated state that can stimulate subsequent ribonuclease cleavage. In Shewanella sp. (strain MR-7), this protein is RNA pyrophosphohydrolase.